The chain runs to 989 residues: Phosphoenolpyruvate carboxylase (989 aa).

Active-site residues include histidine 175 and lysine 630.

The protein belongs to the PEPCase type 1 family. Requires Mg(2+) as cofactor.

It catalyses the reaction oxaloacetate + phosphate = phosphoenolpyruvate + hydrogencarbonate. Its function is as follows. Forms oxaloacetate, a four-carbon dicarboxylic acid source for the tricarboxylic acid cycle. In Prochlorococcus marinus (strain MIT 9215), this protein is Phosphoenolpyruvate carboxylase.